A 211-amino-acid polypeptide reads, in one-letter code: Large ribosomal subunit protein mL48 (211 aa).

Residues 1–27 constitute a mitochondrion transit peptide; sequence MSGTLGKVLGVWTNTVSKQGFSLLRFR. N6-succinyllysine is present on K198.

Belongs to the mitochondrion-specific ribosomal protein mL48 family. Component of the mitochondrial ribosome large subunit (39S) which comprises a 16S rRNA and about 50 distinct proteins. Interacts with OXA1L.

The protein localises to the mitochondrion. The sequence is that of Large ribosomal subunit protein mL48 (Mrpl48) from Mus musculus (Mouse).